Reading from the N-terminus, the 382-residue chain is 3-phytase (382 aa).

The signal sequence occupies residues methionine 1 to alanine 26. A BPP domain is found at histidine 27–leucine 361.

It localises to the secreted. It carries out the reaction 1D-myo-inositol hexakisphosphate + H2O = 1D-myo-inositol 1,2,4,5,6-pentakisphosphate + phosphate. The polypeptide is 3-phytase (phy) (Bacillus subtilis (strain 168)).